The primary structure comprises 1469 residues: Chromosome condensation protein dpy-27 (1469 aa).

The segment at 1–25 is disordered; the sequence is MQPFKRRALTSDDDRPYADTDSMPE. The span at 9–18 shows a compositional bias: basic and acidic residues; that stretch reads LTSDDDRPYA. Residue 122-129 participates in ATP binding; it reads GPNGSGKS. A coiled-coil region spans residues 356–542; it reads ELEENKDIML…KGTLQTMMAE (187 aa). The region spanning 621 to 736 is the SMC hinge domain; the sequence is PGFKGRLGDL…VDSLEEATRI (116 aa). The interval 758-781 is disordered; it reads GALTGGGKPTTGRIRNDNNPNMSG. Coiled coils occupy residues 805-974, 1016-1056, and 1159-1182; these read LKLQ…AQLE, AYQT…DIIE, and TSAK…RMAR. The disordered stretch occupies residues 1404-1469; the sequence is LPEFNRFPPA…VQRRVRRSRH (66 aa). The segment covering 1439-1449 has biased composition (acidic residues); that stretch reads EEEDEEDELIE.

It belongs to the SMC family. SMC4 subfamily. As to quaternary structure, component of the dosage compensation complex, which contains the mix-1/SMC2 and dpy-27/SMC4 heterodimer, and three non SMC subunits that probably regulate the complex: dpy-26, capg-1 and dpy-28. Within the complex, interacts with dpy-28, mix-1, dpy-26 and capg-1. Interacts with dpy-21. Interacts with dpy-28; the interaction is required for dpy-28 protein stability and dpy-28 association with the X chromosome. Interacts with smcl-1.

The protein localises to the nucleus. It localises to the chromosome. In terms of biological role, central component of the condensin I-like dosage compensation complex that associates specifically with hermaphrodite X chromosomes to reduce their gene transcription throughout development. Its strong similarity with the condensin subunit smc4 suggests that it may reduce the X-chromosome transcript level by condensing the chromatin structure during interphase. Involved in the recruitment of the dosage compensation proteins mix-1 and dpy-21 to the X chromosome. Might be involved in the reduction of histone H4 lysine 16 acetylation (H4K16ac) on dosage compensated X chromosomes. As a member of the dosage compensation complex, also binds to regulatory regions of the autosomal her-1 gene, required for male development, possibly contributing to its repression in hermaphrodites. Also plays a role in the regulation of growth and body fat metabolism downstream of the TOR complex 2 pathway. This chain is Chromosome condensation protein dpy-27 (dpy-27), found in Caenorhabditis elegans.